A 371-amino-acid chain; its full sequence is 4-hydroxy-3-methylbut-2-en-1-yl diphosphate synthase (flavodoxin) (371 aa).

Positions 270, 273, 305, and 312 each coordinate [4Fe-4S] cluster.

It belongs to the IspG family. It depends on [4Fe-4S] cluster as a cofactor.

The catalysed reaction is (2E)-4-hydroxy-3-methylbut-2-enyl diphosphate + oxidized [flavodoxin] + H2O + 2 H(+) = 2-C-methyl-D-erythritol 2,4-cyclic diphosphate + reduced [flavodoxin]. It functions in the pathway isoprenoid biosynthesis; isopentenyl diphosphate biosynthesis via DXP pathway; isopentenyl diphosphate from 1-deoxy-D-xylulose 5-phosphate: step 5/6. In terms of biological role, converts 2C-methyl-D-erythritol 2,4-cyclodiphosphate (ME-2,4cPP) into 1-hydroxy-2-methyl-2-(E)-butenyl 4-diphosphate. This Shewanella baltica (strain OS223) protein is 4-hydroxy-3-methylbut-2-en-1-yl diphosphate synthase (flavodoxin).